The following is a 280-amino-acid chain: Urease accessory protein UreD 3 (280 aa).

The protein belongs to the UreD family. As to quaternary structure, ureD, UreF and UreG form a complex that acts as a GTP-hydrolysis-dependent molecular chaperone, activating the urease apoprotein by helping to assemble the nickel containing metallocenter of UreC. The UreE protein probably delivers the nickel.

The protein localises to the cytoplasm. Functionally, required for maturation of urease via the functional incorporation of the urease nickel metallocenter. This chain is Urease accessory protein UreD 3, found in Bradyrhizobium sp. (strain ORS 278).